We begin with the raw amino-acid sequence, 227 residues long: Protein GrpE (227 aa).

Over residues 1–18 (MTQGNQKTEGNPPEQVTV) the composition is skewed to polar residues. 2 disordered regions span residues 1 to 57 (MTQG…GAAT) and 193 to 227 (TEEG…ASGD). Residues 19-35 (TDKRRIDPETGEVRHVP) show a composition bias toward basic and acidic residues. Low complexity-rich tracts occupy residues 41–50 (GGTAPQAATA) and 199–213 (EAAA…AAET).

This sequence belongs to the GrpE family. Homodimer.

The protein localises to the cytoplasm. Participates actively in the response to hyperosmotic and heat shock by preventing the aggregation of stress-denatured proteins, in association with DnaK and GrpE. It is the nucleotide exchange factor for DnaK and may function as a thermosensor. Unfolded proteins bind initially to DnaJ; upon interaction with the DnaJ-bound protein, DnaK hydrolyzes its bound ATP, resulting in the formation of a stable complex. GrpE releases ADP from DnaK; ATP binding to DnaK triggers the release of the substrate protein, thus completing the reaction cycle. Several rounds of ATP-dependent interactions between DnaJ, DnaK and GrpE are required for fully efficient folding. The polypeptide is Protein GrpE (Mycolicibacterium paratuberculosis (strain ATCC BAA-968 / K-10) (Mycobacterium paratuberculosis)).